We begin with the raw amino-acid sequence, 459 residues long: Transcription factor mlcR (459 aa).

Residues 21 to 53 constitute a DNA-binding region (zn(2)-C6 fungal-type); sequence CDRCHAQKLKCTGSNANLVRAQCQRCQQAGLRC. 2 disordered regions span residues 64–84 and 135–170; these read LHKE…PMTA and DPES…DFEG. Residues 69–78 show a composition bias toward low complexity; sequence AAGTTRATET.

The protein resides in the nucleus. Its function is as follows. Transcription factor that regulates the gene cluster that mediates the biosynthesis of compactin, also known as mevastatin or ML-236B, and which acts as a potent competitive inhibitor of HMG-CoA reductase. Binds to the consensus-binding motif 5'-WCGG-N(6)-TCGG-3' of target genes. This Penicillium citrinum protein is Transcription factor mlcR.